Reading from the N-terminus, the 247-residue chain is tRNA pseudouridine synthase A 1 (247 aa).

The active-site Nucleophile is the Asp53. Tyr111 contributes to the substrate binding site.

This sequence belongs to the tRNA pseudouridine synthase TruA family. In terms of assembly, homodimer.

The enzyme catalyses uridine(38/39/40) in tRNA = pseudouridine(38/39/40) in tRNA. Functionally, formation of pseudouridine at positions 38, 39 and 40 in the anticodon stem and loop of transfer RNAs. The polypeptide is tRNA pseudouridine synthase A 1 (Bacillus cereus (strain ATCC 14579 / DSM 31 / CCUG 7414 / JCM 2152 / NBRC 15305 / NCIMB 9373 / NCTC 2599 / NRRL B-3711)).